The sequence spans 163 residues: E1B protein, small T-antigen (163 aa).

This sequence belongs to the adenoviridae E1B 19 kDa protein family.

Its subcellular location is the host cell membrane. It is found in the host nucleus envelope. It localises to the host nucleus lamina. Its function is as follows. Putative adenovirus Bcl-2 homolog that inhibits apoptosis induced by TNF or FAS pathways, as well as p53-mediated apoptosis. Without E1B 19K function, virus production is compromised because of premature death of host cell. Interacts with Bax protein in cell lysates. The polypeptide is E1B protein, small T-antigen (Human adenovirus A serotype 12 (HAdV-12)).